The chain runs to 161 residues: Phosphopantetheine adenylyltransferase (161 aa).

Substrate is bound at residue threonine 10. ATP contacts are provided by residues threonine 10–phenylalanine 11 and histidine 18. Substrate contacts are provided by lysine 42, leucine 74, and arginine 88. ATP contacts are provided by residues glycine 89 to arginine 91, glutamate 99, and tryptophan 124 to threonine 130.

Belongs to the bacterial CoaD family. As to quaternary structure, homohexamer. It depends on Mg(2+) as a cofactor.

The protein localises to the cytoplasm. It carries out the reaction (R)-4'-phosphopantetheine + ATP + H(+) = 3'-dephospho-CoA + diphosphate. It participates in cofactor biosynthesis; coenzyme A biosynthesis; CoA from (R)-pantothenate: step 4/5. Functionally, reversibly transfers an adenylyl group from ATP to 4'-phosphopantetheine, yielding dephospho-CoA (dPCoA) and pyrophosphate. The polypeptide is Phosphopantetheine adenylyltransferase (Haemophilus ducreyi (strain 35000HP / ATCC 700724)).